A 376-amino-acid polypeptide reads, in one-letter code: D-alanine--D-alanine ligase (376 aa).

An ATP-grasp domain is found at 150–358; it reads KIIFEKEGLP…YSELINKLIE (209 aa). An ATP-binding site is contributed by 183-238; that stretch reads EGRLTYPCFVKPSNAGSSVGVNKASDRESLVKALNIAAKNDRRILVEEFINGREIE. Mg(2+)-binding residues include Asp311, Glu325, and Asn327.

Belongs to the D-alanine--D-alanine ligase family. Mg(2+) serves as cofactor. It depends on Mn(2+) as a cofactor.

Its subcellular location is the cytoplasm. It catalyses the reaction 2 D-alanine + ATP = D-alanyl-D-alanine + ADP + phosphate + H(+). It participates in cell wall biogenesis; peptidoglycan biosynthesis. Functionally, cell wall formation. The polypeptide is D-alanine--D-alanine ligase (Ruminiclostridium cellulolyticum (strain ATCC 35319 / DSM 5812 / JCM 6584 / H10) (Clostridium cellulolyticum)).